The chain runs to 86 residues: Large ribosomal subunit protein bL27 (86 aa).

Residues 1-22 are disordered; that stretch reads MATKKAGGSSRNGRDSAGRRLG.

Belongs to the bacterial ribosomal protein bL27 family.

This is Large ribosomal subunit protein bL27 from Rickettsia rickettsii (strain Iowa).